Consider the following 21-residue polypeptide: Serine protease inhibitor 3 (21 aa).

Belongs to the protease inhibitor I3 (leguminous Kunitz-type inhibitor) family. As to expression, tubers.

It is found in the vacuole. Functionally, inhibits trypsin and chymotrypsin (serine proteases). Does not inhibit elastase, subtilisin, cathepsin L nor papain (serine and cysteine proteases). Protects the plant by inhibiting proteases of invading organisms, decreasing both hyphal growth and zoospores germination of Phytophthora infestans. This Solanum tuberosum (Potato) protein is Serine protease inhibitor 3.